The following is a 350-amino-acid chain: Protein RecA (350 aa).

Residue 65–72 (GPESSGKT) participates in ATP binding.

Belongs to the RecA family.

Its subcellular location is the cytoplasm. Can catalyze the hydrolysis of ATP in the presence of single-stranded DNA, the ATP-dependent uptake of single-stranded DNA by duplex DNA, and the ATP-dependent hybridization of homologous single-stranded DNAs. It interacts with LexA causing its activation and leading to its autocatalytic cleavage. This Nautilia profundicola (strain ATCC BAA-1463 / DSM 18972 / AmH) protein is Protein RecA.